The following is an 858-amino-acid chain: ATP-dependent DNA helicase Q-like SIM (858 aa).

The 43-residue stretch at 2 to 44 (DLSSDQLVMKIVEMGFEKLDALEAVKAVGGKSCDDAVEYILKG) folds into the UBA domain. Residues 177 to 353 (LSTWVAHKDC…LESLHLSKET (177 aa)) form the Helicase ATP-binding domain. 190 to 197 (AATGSGKS) lines the ATP pocket. Residues 288-291 (DEAH) carry the DEAH box motif. Residues 402–450 (LAVISRESEEQTDFGSHDSENIHETDYDEDEEDQENSLAKKNSSNGKEL) are disordered. Residues 416-426 (GSHDSENIHET) show a composition bias toward basic and acidic residues. A compositionally biased stretch (acidic residues) spans 427 to 436 (DYDEDEEDQE). A compositionally biased stretch (polar residues) spans 437–448 (NSLAKKNSSNGK). A Helicase C-terminal domain is found at 491 to 627 (EKQKDLEGLT…QTEQAYKMLS (137 aa)). Positions 822–858 (RQRLERRERKPRRERKPRKKRTRGRSSTKLHPWRSKE) are disordered. Basic residues predominate over residues 830 to 858 (RKPRRERKPRKKRTRGRSSTKLHPWRSKE).

It belongs to the helicase family. RecQ subfamily. It depends on Mg(2+) as a cofactor. Requires Mn(2+) as cofactor. As to expression, mostly expressed in roots and seedlings, and, to a lower extent, in leaves, shoots, shoot apical mersitem, inflorescences, flowers, siliques and seeds.

The protein localises to the nucleus. The enzyme catalyses Couples ATP hydrolysis with the unwinding of duplex DNA by translocating in the 3'-5' direction.. It carries out the reaction ATP + H2O = ADP + phosphate + H(+). In terms of biological role, plant specific, probable 3'-5' DNA helicase that may play a role in the repair of DNA. This Arabidopsis thaliana (Mouse-ear cress) protein is ATP-dependent DNA helicase Q-like SIM (RECQSIM).